The sequence spans 440 residues: 3-phosphoshikimate 1-carboxyvinyltransferase (440 aa).

Residues Lys-26, Ser-27, and Arg-31 each contribute to the 3-phosphoshikimate site. Lys-26 provides a ligand contact to phosphoenolpyruvate. Residues Gly-100 and Arg-134 each contribute to the phosphoenolpyruvate site. Positions 180, 181, 182, 208, 323, 346, and 350 each coordinate 3-phosphoshikimate. Position 182 (Gln-182) interacts with phosphoenolpyruvate. Catalysis depends on Asp-323, which acts as the Proton acceptor. Residues Arg-354, Arg-398, and Lys-423 each coordinate phosphoenolpyruvate.

It belongs to the EPSP synthase family. As to quaternary structure, monomer.

The protein resides in the cytoplasm. It carries out the reaction 3-phosphoshikimate + phosphoenolpyruvate = 5-O-(1-carboxyvinyl)-3-phosphoshikimate + phosphate. It participates in metabolic intermediate biosynthesis; chorismate biosynthesis; chorismate from D-erythrose 4-phosphate and phosphoenolpyruvate: step 6/7. In terms of biological role, catalyzes the transfer of the enolpyruvyl moiety of phosphoenolpyruvate (PEP) to the 5-hydroxyl of shikimate-3-phosphate (S3P) to produce enolpyruvyl shikimate-3-phosphate and inorganic phosphate. This chain is 3-phosphoshikimate 1-carboxyvinyltransferase, found in Pasteurella multocida (strain Pm70).